Reading from the N-terminus, the 483-residue chain is MFS-type transporter hepF (483 aa).

The tract at residues 1 to 31 (METPAGKADRPRDHDSEQSQDNVVSWEGEDD) is disordered. The span at 7 to 17 (KADRPRDHDSE) shows a compositional bias: basic and acidic residues. Helical transmembrane passes span 89–109 (TIVV…AAPI), 124–144 (ILYT…MLIV), 147–167 (FFAG…VADL), 179–199 (FVTL…GFLT), 206–226 (WVFW…ILFT), 276–296 (PISL…YVLV), 311–331 (IGIS…GLWI), 357–377 (PMMI…GWSV), 385–405 (MPIV…MPMV), 416–436 (AASA…VLPL), and 448–468 (GWGN…LIAI).

The protein belongs to the major facilitator superfamily.

Its subcellular location is the cell membrane. Functionally, MFS-type transporter; part of the gene cluster that mediates the biosynthesis of heptelidic acid (HA), a sesquiterpene lactone that acts as an inhibitor of glyceraldehyde-3-phosphatedehydrogenase (GAPDH) and a growth inhibitor of the salt-tolerant lactic acid bacteria in soy sauce brewing. Might be required for efficient secretion of heptelidic acid. This is MFS-type transporter hepF (hepF) from Aspergillus oryzae (strain ATCC 42149 / RIB 40) (Yellow koji mold).